We begin with the raw amino-acid sequence, 297 residues long: MLRLGSHVSMSGKKMLLGASEEAASYGSNTFMIYTGAPQNTRRKPIEELNIEAGLEHMKAHDMADIVVHAPYIINIGNSVKPETFELGVNFLQSEIERTRALGAKQIVLHPGAHVGEGADKGIKQIIQGLNEALIHDQDVQIALETMAGKGSECGRTFEELAQIIDGVTHNELLSVTFDTCHTHDAGYDIVNDFDGVLNQFDKIVGIDRLKVLHINDSKNERGAHKDRHANIGFGHIGFDALHYIVHHPQLADVPKILETPYVGGDKASKKAPYKWEIAMLKNGEFDPDLLNKIQNS.

Residues histidine 69, histidine 110, glutamate 145, aspartate 179, histidine 182, histidine 214, aspartate 227, histidine 229, and glutamate 259 each coordinate Zn(2+).

This sequence belongs to the AP endonuclease 2 family. Requires Zn(2+) as cofactor.

It carries out the reaction Endonucleolytic cleavage to 5'-phosphooligonucleotide end-products.. Functionally, endonuclease IV plays a role in DNA repair. It cleaves phosphodiester bonds at apurinic or apyrimidinic (AP) sites, generating a 3'-hydroxyl group and a 5'-terminal sugar phosphate. The sequence is that of Probable endonuclease 4 from Listeria monocytogenes serovar 1/2a (strain ATCC BAA-679 / EGD-e).